The sequence spans 471 residues: MAGKTLYDKLWDSHVVKQRDDGSALIYIDRQLLHEVTSPQAFEGLRLAGRKPWRVDANLATPDHNVPTTERSAGVQGIEDPISRIQVQTLDENCEEFGIVEFKMLDKRQGIVHVIGPEQGATLPGMTIVCGDSHTSTHGAFAALAHGIGTSEVEHVLATQCLVQKKMKNLLIKVNGQLARGVTAKDVILAIIGEIGTAGGTGYAMEFAGEAIESLSMEGRMTICNMAIEAGARAGLVAVDDKTIEYVKGRPYSPKGELWDKAVAAWRDLKSDSDAVFDKVVELNGADIEPQVTWGTSPEMVAGVSGSVPDPEKAEDATAKEGISRALKYMGLQAGAAITDIKLDRVFIGSCTNSRIEDLREAAAVVKGRKVAANVKQALVVPGSGLVKEQAEQEGLDKIFIEAGLEWREPGCSMCLAMNADKLGQGEHCASTSNRNFEGRQGFGGRTHLVSPAMAAAAAVFGHFVDVRELI.

[4Fe-4S] cluster contacts are provided by C351, C412, and C415.

Belongs to the aconitase/IPM isomerase family. LeuC type 1 subfamily. In terms of assembly, heterodimer of LeuC and LeuD. It depends on [4Fe-4S] cluster as a cofactor.

It catalyses the reaction (2R,3S)-3-isopropylmalate = (2S)-2-isopropylmalate. It functions in the pathway amino-acid biosynthesis; L-leucine biosynthesis; L-leucine from 3-methyl-2-oxobutanoate: step 2/4. Functionally, catalyzes the isomerization between 2-isopropylmalate and 3-isopropylmalate, via the formation of 2-isopropylmaleate. The protein is 3-isopropylmalate dehydratase large subunit of Hahella chejuensis (strain KCTC 2396).